The primary structure comprises 158 residues: Transcription elongation factor GreA (158 aa).

It belongs to the GreA/GreB family.

Functionally, necessary for efficient RNA polymerase transcription elongation past template-encoded arresting sites. The arresting sites in DNA have the property of trapping a certain fraction of elongating RNA polymerases that pass through, resulting in locked ternary complexes. Cleavage of the nascent transcript by cleavage factors such as GreA or GreB allows the resumption of elongation from the new 3'terminus. GreA releases sequences of 2 to 3 nucleotides. In Salmonella typhi, this protein is Transcription elongation factor GreA.